The chain runs to 196 residues: Transmembrane protein 126A (196 aa).

Residues 1 to 34 (MESHKPSTSKDDLILNIISRKIKQLPESDRNLLE) lie on the Mitochondrial matrix side of the membrane. Residues 35-55 (YGSAYIGLNAAFGGLIANSLF) form a helical membrane-spanning segment. Over 56–57 (RR) the chain is Mitochondrial intermembrane. Residues 58–78 (ILNVTQARLASSLPMAVIPFL) traverse the membrane as a helical segment. The Mitochondrial matrix portion of the chain corresponds to 79–106 (TANLSYQSLVSLPLSTGDLNCETCTTTR). A helical transmembrane segment spans residues 107 to 127 (GALVGLVMGGLYPILLAIPVN). The Mitochondrial intermembrane segment spans residues 128-159 (GGLAARYESSPLPQRGNIFNYWITVSKPVFRK). Residues 160 to 176 (MLFPTLLQTVFASYLGS) form a helical membrane-spanning segment. At 177–196 (RQYKLLIKALQLPEPDLEIH) the chain is on the mitochondrial matrix side.

The protein belongs to the TMEM126 family. Interacts with OXA1L; promoting cotranslational quality control in mitochondria. In the retina, significant levels of expression are detected in the ganglion cell layer, the optic nerve head, the outer plexiform layer, and in the outer ellipsoide length of photoreceptor inner segments.

The protein localises to the mitochondrion inner membrane. Protein required for the cotranslational protein quality control in the inner membrane of the mitochondria. Associates with newly synthesized polypeptides and may act as a chaperone that cooperates with OXA1L for the insertion of newly synthesized mitochondrial proteins into the inner membrane. Required for the assembly of the ND4 module of mitochondrial complex I. The polypeptide is Transmembrane protein 126A (Mus musculus (Mouse)).